The sequence spans 338 residues: Ketol-acid reductoisomerase (NADP(+)) (338 aa).

Residues 1–181 (MNVYYDKDCD…GGGRSGIIET (181 aa)) enclose the KARI N-terminal Rossmann domain. Residues 24–27 (YGSQ), Arg-47, Ser-50, Ser-52, and 82–85 (DEFQ) each bind NADP(+). The active site involves His-107. Gly-133 lines the NADP(+) pocket. In terms of domain architecture, KARI C-terminal knotted spans 182–327 (TFKDETETDL…AKLRGMMPWI (146 aa)). Mg(2+) is bound by residues Asp-190, Glu-194, Glu-226, and Glu-230. Substrate is bound at residue Ser-251.

The protein belongs to the ketol-acid reductoisomerase family. Mg(2+) serves as cofactor.

The enzyme catalyses (2R)-2,3-dihydroxy-3-methylbutanoate + NADP(+) = (2S)-2-acetolactate + NADPH + H(+). The catalysed reaction is (2R,3R)-2,3-dihydroxy-3-methylpentanoate + NADP(+) = (S)-2-ethyl-2-hydroxy-3-oxobutanoate + NADPH + H(+). The protein operates within amino-acid biosynthesis; L-isoleucine biosynthesis; L-isoleucine from 2-oxobutanoate: step 2/4. Its pathway is amino-acid biosynthesis; L-valine biosynthesis; L-valine from pyruvate: step 2/4. Involved in the biosynthesis of branched-chain amino acids (BCAA). Catalyzes an alkyl-migration followed by a ketol-acid reduction of (S)-2-acetolactate (S2AL) to yield (R)-2,3-dihydroxy-isovalerate. In the isomerase reaction, S2AL is rearranged via a Mg-dependent methyl migration to produce 3-hydroxy-3-methyl-2-ketobutyrate (HMKB). In the reductase reaction, this 2-ketoacid undergoes a metal-dependent reduction by NADPH to yield (R)-2,3-dihydroxy-isovalerate. The protein is Ketol-acid reductoisomerase (NADP(+)) of Psychrobacter cryohalolentis (strain ATCC BAA-1226 / DSM 17306 / VKM B-2378 / K5).